Here is a 662-residue protein sequence, read N- to C-terminus: Probable conjugal transfer protein TrbE part 2 (662 aa).

307–314 (GPTGSGKS) contacts ATP.

It belongs to the TrbE/VirB4 family.

In Sinorhizobium fredii (strain NBRC 101917 / NGR234), this protein is Probable conjugal transfer protein TrbE part 2 (trbEB).